The primary structure comprises 327 residues: Flotillin-like protein FloA (327 aa).

The next 2 helical transmembrane spans lie at 8-28 and 29-49; these read VLLI…LVPI and PLWI…LVGM.

Belongs to the flotillin-like FloA family. Homooligomerizes.

The protein resides in the cell membrane. The protein localises to the membrane raft. In terms of biological role, found in functional membrane microdomains (FMM) that may be equivalent to eukaryotic membrane rafts. FMMs are highly dynamic and increase in number as cells age. Flotillins are thought to be important factors in membrane fluidity. The chain is Flotillin-like protein FloA from Exiguobacterium sibiricum (strain DSM 17290 / CCUG 55495 / CIP 109462 / JCM 13490 / 255-15).